A 387-amino-acid chain; its full sequence is Adaptive-response sensory kinase SasA (387 aa).

Residues 1–97 are interacts with KaiC; that stretch reads MGESLSPQAL…TDQLANQLPQ (97 aa). Residues 158-382 enclose the Histidine kinase domain; that stretch reads LVAHDLRNPL…TFHFTMPVYR (225 aa). At H161 the chain carries Phosphohistidine; by autocatalysis.

Homooligomerizes. Part of the circadian clock (KaiA, KaiB, KaiC, CikA, RpaA, SasA), the composition of which varies during the circadian cycle. Binds to the CI domain of KaiC; KaiB(fs) and SasA compete for the binding site. Binds preferentially to doubly phosphorylated KaiC. Interacts with LdpA. Post-translationally, autophosphorylates in vitro.

The enzyme catalyses ATP + protein L-histidine = ADP + protein N-phospho-L-histidine.. In terms of biological role, member of the two-component regulatory system SasA/RpaA involved in genome-wide circadian gene expression. One of three clock output pathways. Participates in the KaiABC clock protein complex, which constitutes the main circadian regulator in cyanobacteria, via its interaction with KaiC. Required for robustness of the circadian rhythm of gene expression and involved in clock output. KaiC enhances the autophosphorylation activity of SasA, which then transfers its phosphate group to RpaA to activate it. Phosphotransfer is maximal when KaiC phosphorylation is active during the circadian cycle; this two-component system is activated by fully phosphorylated KaiC. A very robust clock is reconstituted with KaiA, KaiB, KaiC, SasA, CikA and RpaA; output is measured by transcription from an appropriate reporter. In addition to its output function, recruits fold-shifted KaiB (KaiB(fs)) to KaiC to cooperatively form the KaiB(6):KaiC(6) complex (independent of SasA kinase activity); at physiological concentrations increases their association. At higher concentrations SasA and KaiB(fs) compete to bind to KaiC. Mutations that decrease cooperativity nearly phenocopy a deletion mutation. Its function is as follows. Autophosphorylation and phosphotransfer activities are not essential for clock rhythms in continuous light, but they are essential for adaptation to light/dark cycles. The protein is Adaptive-response sensory kinase SasA of Synechococcus elongatus (strain ATCC 33912 / PCC 7942 / FACHB-805) (Anacystis nidulans R2).